A 367-amino-acid polypeptide reads, in one-letter code: Protein RIC-3 (367 aa).

The N-terminal stretch at 1–31 (MAYSTVQRVALASGLVLAVSLLLPKAFLSRG) is a signal peptide. A disordered region spans residues 30 to 67 (RGKRPEPPPGPEGKLDRFPPMMHHHSAPSDGQTPGARF). Residues 32–95 (KRPEPPPGPE…AGGGGSGRGL (64 aa)) lie on the Lumenal side of the membrane. The helical transmembrane segment at 96–116 (MGQIIPIYGFGIFLYILYILF) threads the bilayer. The Cytoplasmic portion of the chain corresponds to 117-367 (KLSKGKTAED…LRKRNPQGFE (251 aa)). Residues 138–169 (HRKITNFELVQLQEKLKETEEAMEKLINRVGP) adopt a coiled-coil conformation. At Lys-201 the chain carries N6-acetyllysine; alternate. A Glycyl lysine isopeptide (Lys-Gly) (interchain with G-Cter in ubiquitin); alternate cross-link involves residue Lys-201. 2 disordered regions span residues 262-301 (QMGE…PESC) and 322-367 (ADGY…QGFE). Residues 271 to 280 (SERLSWDHLP) show a composition bias toward basic and acidic residues. Over residues 358–367 (LRKRNPQGFE) the composition is skewed to basic residues.

It belongs to the ric-3 family. Monomer and homodimer. Interacts with CHRNA7, CHRNA3, CHRNA4, CHRNB2, CHRNB4 and HTR3A. Expressed in brain, with highest levels in hippocampus, cerebellum and superior colliculus.

It localises to the endoplasmic reticulum membrane. Molecular chaperone which promotes the proper subunit assembly and surface trafficking of alpha-7 (CHRNA7) nicotinic acetylcholine receptor. Promotes the proper subunit assembly and cell surface expression of alpha-8 (CHRNA8) nicotinic acetylcholine receptor. May also promote functional expression of homomeric serotoninergic 5-HT3 receptors, and of heteromeric acetylcholine receptors alpha-3/beta-2, alpha-3/beta-4, alpha-4/beta-2 and alpha-4/beta-4. The sequence is that of Protein RIC-3 (Ric3) from Mus musculus (Mouse).